A 160-amino-acid chain; its full sequence is NADH-quinone oxidoreductase subunit B (160 aa).

4 residues coordinate [4Fe-4S] cluster: Cys-37, Cys-38, Cys-102, and Cys-132.

Belongs to the complex I 20 kDa subunit family. As to quaternary structure, NDH-1 is composed of 14 different subunits. Subunits NuoB, C, D, E, F, and G constitute the peripheral sector of the complex. [4Fe-4S] cluster is required as a cofactor.

Its subcellular location is the cell inner membrane. It carries out the reaction a quinone + NADH + 5 H(+)(in) = a quinol + NAD(+) + 4 H(+)(out). In terms of biological role, NDH-1 shuttles electrons from NADH, via FMN and iron-sulfur (Fe-S) centers, to quinones in the respiratory chain. Couples the redox reaction to proton translocation (for every two electrons transferred, four hydrogen ions are translocated across the cytoplasmic membrane), and thus conserves the redox energy in a proton gradient. The sequence is that of NADH-quinone oxidoreductase subunit B from Cupriavidus pinatubonensis (strain JMP 134 / LMG 1197) (Cupriavidus necator (strain JMP 134)).